The primary structure comprises 882 residues: Bifunctional heparan sulfate N-deacetylase/N-sulfotransferase 1 (882 aa).

At 1–17 the chain is on the cytoplasmic side; that stretch reads MPALACLRRLCRHLSPQ. The interval 1–169 is sufficient for localization to Golgi membrane; that stretch reads MPALACLRRL…VAYGVGIIGF (169 aa). The chain crosses the membrane as a helical; Signal-anchor for type II membrane protein span at residues 18-38; it reads AVLFLLFVFCLFSVFVSAYYL. Residues 39–882 lie on the Lumenal side of the membrane; that stretch reads YGWNRGLEPS…WLREDLQNTR (844 aa). The tract at residues 40–598 is heparan sulfate N-deacetylase 1; it reads GWNRGLEPSA…KRHKDIWSKE (559 aa). Residues Asn231, Asn351, and Asn401 are each glycosylated (N-linked (GlcNAc...) asparagine). A heparan sulfate N-sulfotransferase 1 region spans residues 599–882; sequence KTCDRFPKLL…WLREDLQNTR (284 aa). Lys614 (for sulfotransferase activity) is an active-site residue. Residue 614–618 coordinates adenosine 3',5'-bisphosphate; the sequence is KTGTT. N-linked (GlcNAc...) asparagine glycosylation is present at Asn667. The adenosine 3',5'-bisphosphate site is built by Ser712 and Trp817. Residues Cys818 and Cys828 are joined by a disulfide bond. 833–837 provides a ligand contact to adenosine 3',5'-bisphosphate; it reads KGRKY.

Belongs to the sulfotransferase 1 family. NDST subfamily. Monomer. Interacts with heparan sulfate co-polymerase subunits EXT1 and EXT2. In terms of tissue distribution, widely expressed in adult and throughout development.

The protein resides in the golgi apparatus membrane. The protein localises to the golgi apparatus. It is found in the trans-Golgi network membrane. It localises to the cis-Golgi network membrane. The catalysed reaction is N-acetyl-alpha-D-glucosaminyl-[heparan sulfate](n) + H2O = alpha-D-glucosaminyl-[heparan sulfate](n) + acetate. It catalyses the reaction alpha-D-glucosaminyl-[heparan sulfate](n) + 3'-phosphoadenylyl sulfate = N-sulfo-alpha-D-glucosaminyl-[heparan sulfate](n) + adenosine 3',5'-bisphosphate + 2 H(+). Its pathway is glycan metabolism; heparan sulfate biosynthesis. It functions in the pathway glycan metabolism; heparin biosynthesis. With respect to regulation, inhibited by long N-sulfated sequences (more than 6 sugar residues) accumulating in its substrates heparan sulfate, and heparin. Its function is as follows. Essential bifunctional enzyme that catalyzes both the N-deacetylation and the N-sulfation of glucosamine (GlcNAc) of the glycosaminoglycan in heparan sulfate. Modifies the GlcNAc-GlcA disaccharide repeating sugar backbone to make N-sulfated heparosan, a prerequisite substrate for later modifications in heparin biosynthesis. Plays a role in determining the extent and pattern of sulfation of heparan sulfate. Participates in biosynthesis of heparan sulfate that can ultimately serve as L-selectin ligands, thereby playing a role in inflammatory response. Required for the exosomal release of SDCBP, CD63 and syndecan. The polypeptide is Bifunctional heparan sulfate N-deacetylase/N-sulfotransferase 1 (Mus musculus (Mouse)).